Reading from the N-terminus, the 636-residue chain is Alpha-L-iduronidase (636 aa).

The signal sequence occupies residues Met-1 to Ala-16. Alpha-D-mannopyranose-binding residues include Pro-39, Ile-43, and His-45. Residues His-78, Asn-169, and Glu-170 each coordinate alpha-L-iduronate. The active-site Proton donor is the Glu-170. The N-linked (GlcNAc...) asparagine glycan is linked to Asn-180. Lys-257 lines the alpha-L-iduronate pocket. Asn-268 carries N-linked (GlcNAc...) asparagine glycosylation. Alpha-L-iduronate contacts are provided by Glu-293 and Gly-299. Glu-293 functions as the Nucleophile in the catalytic mechanism. An alpha-D-mannopyranose-binding site is contributed by Trp-300. Alpha-L-iduronate-binding residues include Asp-342 and Arg-356. N-linked (GlcNAc...) asparagine glycans are attached at residues Asn-365, Asn-448, Asn-453, and Asn-483. Cys-529 and Cys-565 are disulfide-bonded. An N-linked (GlcNAc...) asparagine glycan is attached at Asn-622.

The protein belongs to the glycosyl hydrolase 39 family.

It is found in the lysosome. The catalysed reaction is Hydrolysis of unsulfated alpha-L-iduronosidic linkages in dermatan sulfate.. Essential lysosomal hydrolase responsible for the degradation of glycosaminoglycans (GAG) such as heparan sulfate. Required for lysosome function and autophagy. Consequently, has an essential role in the development, maintenance and function of various cells, tissues, and organs, including the muscles and the central nervous system (CNS). This Drosophila melanogaster (Fruit fly) protein is Alpha-L-iduronidase.